A 342-amino-acid polypeptide reads, in one-letter code: MYSHVRDLLFRLNPETSHEFSLDMLGAAERLKLIGLMAAKVPETPVEVMGLRFPNPVGLAAGLDKNGDYFNALGALGFGFVEIGTITPRPQPGNAQPRLFRIPEAKAIINRMGFNNKGVDHLVAQVKKRRYQGILGINIGKNATTPVENAVDDYLTCLRKVYDHADYITVNISSPNTPGLRSLQFGDSLSQLLAPLKKEQGVLQQAGGRYVPIAVKIAPDMDDSEIAQVAGVLLQEGMDGVIATNTTIGREGVEGYDTGKEAGGLSGLPVRDKSTAVIQSLNQCLGGKLPIIGVGGIFDGASAADKVRAGASLVQVYSGFIYEGPALIAAAAAGIASYHQGQ.

FMN contacts are provided by residues 61 to 65 (AGLDK) and Thr-85. Lys-65 contacts substrate. Position 110 to 114 (110 to 114 (NRMGF)) interacts with substrate. 2 residues coordinate FMN: Asn-138 and Asn-171. Residue Asn-171 coordinates substrate. Catalysis depends on Ser-174, which acts as the Nucleophile. Asn-176 contributes to the substrate binding site. The FMN site is built by Lys-216 and Thr-244. 245-246 (NT) is a substrate binding site. FMN contacts are provided by residues Gly-267, Gly-296, and 317 to 318 (YS).

The protein belongs to the dihydroorotate dehydrogenase family. Type 2 subfamily. In terms of assembly, monomer. It depends on FMN as a cofactor.

The protein resides in the cell membrane. It carries out the reaction (S)-dihydroorotate + a quinone = orotate + a quinol. The protein operates within pyrimidine metabolism; UMP biosynthesis via de novo pathway; orotate from (S)-dihydroorotate (quinone route): step 1/1. Its function is as follows. Catalyzes the conversion of dihydroorotate to orotate with quinone as electron acceptor. The polypeptide is Dihydroorotate dehydrogenase (quinone) (Cellvibrio japonicus (strain Ueda107) (Pseudomonas fluorescens subsp. cellulosa)).